The primary structure comprises 1957 residues: Chromatin modification-related protein EAF1 A (1957 aa).

4 disordered regions span residues 108 to 208 (ASPH…TDLV), 261 to 287 (NRVS…GSKT), 323 to 373 (GGSP…SHAN), and 449 to 469 (NQSH…ETEK). The segment covering 140–151 (SENKSVEGERNL) has biased composition (basic and acidic residues). Polar residues-rich tracts occupy residues 261–270 (NRVSSNSLNT), 333–342 (GQKNSSTQLN), and 355–372 (TNRG…SSHA). In terms of domain architecture, HSA spans 563–641 (CGTAPVEVRE…LSNAILQFWS (79 aa)). Disordered stretches follow at residues 833-909 (GSNS…AVQK) and 928-950 (AETS…DQTW). Residues 884–898 (TDASSGDTSSFQDEY) are compositionally biased toward polar residues. The SANT domain occupies 1049–1105 (SGNPWSLFEDQALVVLVHDMGPNWELISDAMNSTLKIKCIYRNPTECKDRHKILMDK). 7 disordered regions span residues 1107 to 1131 (AGDG…PGIP), 1282 to 1314 (TPVL…GLQS), 1344 to 1367 (LSGR…DRGH), 1449 to 1644 (QGNS…QQLN), 1687 to 1768 (PVRP…IAPA), 1804 to 1840 (ELSK…PQAS), and 1876 to 1957 (SSNT…TKVE). Composition is skewed to polar residues over residues 1116–1125 (DSGNSQSYPS), 1290–1314 (AHPS…GLQS), 1344–1358 (LSGR…STPA), 1459–1472 (SNLS…TTPV), 1479–1492 (LSQQ…SHVL), and 1501–1510 (QSPSQATGAQ). Low complexity-rich tracts occupy residues 1523 to 1534 (QRYLQQQQQQQQ) and 1545 to 1562 (VQQP…NSPQ). Pro residues predominate over residues 1563–1579 (TQPPVSPQPLSMPPVSP). Polar residues-rich tracts occupy residues 1582 to 1595 (NINA…QKSQ), 1604 to 1618 (SPQS…QAGK), 1635 to 1644 (RQPTQGQQLN), 1691 to 1722 (DQQS…QQLP), and 1734 to 1758 (QQQM…CNIL). Low complexity predominate over residues 1759 to 1768 (STSSPSIAPA). A compositionally biased stretch (basic and acidic residues) spans 1805-1815 (LSKKSQAERMP). Polar residues-rich tracts occupy residues 1819-1832 (QSVT…SMGT) and 1876-1894 (SSNT…NQGL). Composition is skewed to basic and acidic residues over residues 1913–1922 (SEEKRPKLPE) and 1932–1942 (LASEEQPHLEE).

This sequence belongs to the EAF1 family. As to quaternary structure, component of the NuA4 histone acetyltransferase complex. Interacts with ARP4 and SWC4, and (via HSA domain) with TAF14 and TAF14B. As to expression, expressed in leaves.

It localises to the nucleus. In terms of biological role, component of the NuA4 histone acetyltransferase complex which is involved in transcriptional activation of selected genes principally by acetylation of nucleosomal histone H4 and H2A. This is Chromatin modification-related protein EAF1 A (EAF1A) from Arabidopsis thaliana (Mouse-ear cress).